A 97-amino-acid polypeptide reads, in one-letter code: Protein MxiI (97 aa).

It to S.typhimurium PrgJ.

Functionally, necessary for the secretion of IPA invasins. The chain is Protein MxiI (mxiI) from Shigella flexneri.